We begin with the raw amino-acid sequence, 75 residues long: Conotoxin Leo-O3 (75 aa).

Residues 1 to 22 (MKLTCVVIVAVLFLTACQLATA) form the signal peptide. The propeptide occupies 23 to 42 (DISGGMRKHRALRSTTKLSR). 3 cysteine pairs are disulfide-bonded: Cys-47/Cys-60, Cys-54/Cys-63, and Cys-59/Cys-69. Cys-69 carries the post-translational modification Cysteine amide. Residues 70–75 (GSGLHV) constitute a propeptide that is removed on maturation.

Belongs to the conotoxin O1 superfamily. As to expression, expressed by the venom duct.

It localises to the secreted. The sequence is that of Conotoxin Leo-O3 from Conus leopardus (Leopard cone).